A 337-amino-acid polypeptide reads, in one-letter code: GTP 3',8-cyclase (337 aa).

The Radical SAM core domain occupies 17–243 (PFQRQYYYLR…HKSHTDGPAK (227 aa)). Residue arginine 26 coordinates GTP. Residues cysteine 33 and cysteine 37 each coordinate [4Fe-4S] cluster. Tyrosine 39 is an S-adenosyl-L-methionine binding site. Cysteine 40 provides a ligand contact to [4Fe-4S] cluster. A GTP-binding site is contributed by arginine 76. Glycine 80 serves as a coordination point for S-adenosyl-L-methionine. Position 107 (threonine 107) interacts with GTP. Serine 131 provides a ligand contact to S-adenosyl-L-methionine. Lysine 168 serves as a coordination point for GTP. Methionine 202 provides a ligand contact to S-adenosyl-L-methionine. 2 residues coordinate [4Fe-4S] cluster: cysteine 265 and cysteine 268. GTP is bound at residue 270-272 (RLR). Cysteine 282 contacts [4Fe-4S] cluster.

This sequence belongs to the radical SAM superfamily. MoaA family. As to quaternary structure, monomer and homodimer. The cofactor is [4Fe-4S] cluster.

The enzyme catalyses GTP + AH2 + S-adenosyl-L-methionine = (8S)-3',8-cyclo-7,8-dihydroguanosine 5'-triphosphate + 5'-deoxyadenosine + L-methionine + A + H(+). The protein operates within cofactor biosynthesis; molybdopterin biosynthesis. In terms of biological role, catalyzes the cyclization of GTP to (8S)-3',8-cyclo-7,8-dihydroguanosine 5'-triphosphate. This is GTP 3',8-cyclase from Haemophilus influenzae (strain PittEE).